The chain runs to 242 residues: tRNA (guanine-N(1)-)-methyltransferase (242 aa).

S-adenosyl-L-methionine is bound by residues G114 and 134-139; that span reads IGDFVL. A compositionally biased stretch (basic and acidic residues) spans 223–233; that stretch reads RRDLLPEHSKN. A disordered region spans residues 223–242; the sequence is RRDLLPEHSKNNPEQTNKLS.

Belongs to the RNA methyltransferase TrmD family. As to quaternary structure, homodimer.

The protein localises to the cytoplasm. The enzyme catalyses guanosine(37) in tRNA + S-adenosyl-L-methionine = N(1)-methylguanosine(37) in tRNA + S-adenosyl-L-homocysteine + H(+). Specifically methylates guanosine-37 in various tRNAs. The polypeptide is tRNA (guanine-N(1)-)-methyltransferase (Rhodopirellula baltica (strain DSM 10527 / NCIMB 13988 / SH1)).